Here is a 324-residue protein sequence, read N- to C-terminus: Phospho-N-acetylmuramoyl-pentapeptide-transferase (324 aa).

The next 10 membrane-spanning stretches (helical) occupy residues 5–25, 50–70, 77–97, 117–137, 147–167, 176–196, 203–223, 227–247, 250–270, and 302–322; these read VILF…PILI, GTPT…TIVM, ISPE…LGFL, LIGQ…YNFA, LSFD…VGGS, LDGL…ILAW, VAIF…FNAH, VFMG…IAIL, LEIL…SVIL, and VVVT…YIEV.

Belongs to the glycosyltransferase 4 family. MraY subfamily. It depends on Mg(2+) as a cofactor.

It localises to the cell membrane. The enzyme catalyses UDP-N-acetyl-alpha-D-muramoyl-L-alanyl-gamma-D-glutamyl-meso-2,6-diaminopimeloyl-D-alanyl-D-alanine + di-trans,octa-cis-undecaprenyl phosphate = di-trans,octa-cis-undecaprenyl diphospho-N-acetyl-alpha-D-muramoyl-L-alanyl-D-glutamyl-meso-2,6-diaminopimeloyl-D-alanyl-D-alanine + UMP. The protein operates within cell wall biogenesis; peptidoglycan biosynthesis. Its function is as follows. Catalyzes the initial step of the lipid cycle reactions in the biosynthesis of the cell wall peptidoglycan: transfers peptidoglycan precursor phospho-MurNAc-pentapeptide from UDP-MurNAc-pentapeptide onto the lipid carrier undecaprenyl phosphate, yielding undecaprenyl-pyrophosphoryl-MurNAc-pentapeptide, known as lipid I. The protein is Phospho-N-acetylmuramoyl-pentapeptide-transferase of Bacillus subtilis (strain 168).